A 236-amino-acid chain; its full sequence is Class B acid phosphatase (236 aa).

A signal peptide spans 1-22; it reads MNHTLRSITLVLACVASLSANA. Catalysis depends on aspartate 70, which acts as the Nucleophile. Aspartate 70 and aspartate 72 together coordinate Mg(2+). Catalysis depends on aspartate 72, which acts as the Proton donor. Substrate-binding positions include 138–139 and lysine 176; that span reads TG. Aspartate 191 is a binding site for Mg(2+).

This sequence belongs to the class B bacterial acid phosphatase family. As to quaternary structure, homotetramer. It depends on Mg(2+) as a cofactor.

Its subcellular location is the periplasm. It carries out the reaction a phosphate monoester + H2O = an alcohol + phosphate. Functionally, dephosphorylates several organic phosphate monoesters. Also has a phosphotransferase activity catalyzing the transfer of low-energy phosphate groups from organic phosphate monoesters to free hydroxyl groups of various organic compounds. This Marinomonas sp. (strain MWYL1) protein is Class B acid phosphatase.